Reading from the N-terminus, the 310-residue chain is MSWLDKIVPSMSRTQRADRRKSVPDGLWRKCPNCEAVLYLPELERHQSVCPKCDHHLRLTARKRLNWFLDTEGREEIAADLQPVDRLKFRDSKKYKDRLAAAQKETDENDALIAMRGKLDGLPVVAVAFEFSFMGGSMGAVVGEKFVRAATQAREEGVPLVCFAASGGARMQEALFSLMQMAKTSAALEKLKQEGVPYISVLTDPVFGGVSASLAMLGDINVAEPNALIGFAGPRVIEQTVREQLPEGFQRSEFLLEHGTVDMIVHRHDMRERLGSVMRKLTHQPHQDRDAEPDDTASQSTLDEFSQADH.

The 270-residue stretch at 27 to 296 (LWRKCPNCEA…QDRDAEPDDT (270 aa)) folds into the CoA carboxyltransferase N-terminal domain. Zn(2+)-binding residues include C31, C34, C50, and C53. A C4-type zinc finger spans residues 31–53 (CPNCEAVLYLPELERHQSVCPKC). Positions 282–310 (THQPHQDRDAEPDDTASQSTLDEFSQADH) are disordered.

Belongs to the AccD/PCCB family. As to quaternary structure, acetyl-CoA carboxylase is a heterohexamer composed of biotin carboxyl carrier protein (AccB), biotin carboxylase (AccC) and two subunits each of ACCase subunit alpha (AccA) and ACCase subunit beta (AccD). It depends on Zn(2+) as a cofactor.

The protein resides in the cytoplasm. The catalysed reaction is N(6)-carboxybiotinyl-L-lysyl-[protein] + acetyl-CoA = N(6)-biotinyl-L-lysyl-[protein] + malonyl-CoA. It participates in lipid metabolism; malonyl-CoA biosynthesis; malonyl-CoA from acetyl-CoA: step 1/1. Functionally, component of the acetyl coenzyme A carboxylase (ACC) complex. Biotin carboxylase (BC) catalyzes the carboxylation of biotin on its carrier protein (BCCP) and then the CO(2) group is transferred by the transcarboxylase to acetyl-CoA to form malonyl-CoA. This chain is Acetyl-coenzyme A carboxylase carboxyl transferase subunit beta, found in Chromohalobacter salexigens (strain ATCC BAA-138 / DSM 3043 / CIP 106854 / NCIMB 13768 / 1H11).